The chain runs to 325 residues: Beta-ketoacyl-[acyl-carrier-protein] synthase III (325 aa).

Catalysis depends on residues Cys-114 and His-252. The segment at 253-257 (QANFR) is ACP-binding. Residue Asn-282 is part of the active site.

It belongs to the thiolase-like superfamily. FabH family. As to quaternary structure, homodimer.

Its subcellular location is the cytoplasm. It catalyses the reaction malonyl-[ACP] + acetyl-CoA + H(+) = 3-oxobutanoyl-[ACP] + CO2 + CoA. It participates in lipid metabolism; fatty acid biosynthesis. Catalyzes the condensation reaction of fatty acid synthesis by the addition to an acyl acceptor of two carbons from malonyl-ACP. Catalyzes the first condensation reaction which initiates fatty acid synthesis and may therefore play a role in governing the total rate of fatty acid production. Possesses both acetoacetyl-ACP synthase and acetyl transacylase activities. Its substrate specificity determines the biosynthesis of branched-chain and/or straight-chain of fatty acids. The polypeptide is Beta-ketoacyl-[acyl-carrier-protein] synthase III (Novosphingobium aromaticivorans (strain ATCC 700278 / DSM 12444 / CCUG 56034 / CIP 105152 / NBRC 16084 / F199)).